A 369-amino-acid chain; its full sequence is Lipoyl synthase, mitochondrial (369 aa).

A mitochondrion-targeting transit peptide spans 1–32 (MLTKGVRALAWSPRRYITLDAEAAKPVVAKRR). [4Fe-4S] cluster is bound by residues cysteine 106, cysteine 111, cysteine 117, cysteine 136, cysteine 140, cysteine 143, and serine 351. A Radical SAM core domain is found at 121 to 340 (NKGSATATIM…KEKALELGFL (220 aa)).

The protein belongs to the radical SAM superfamily. Lipoyl synthase family. [4Fe-4S] cluster serves as cofactor.

The protein localises to the mitochondrion. It carries out the reaction [[Fe-S] cluster scaffold protein carrying a second [4Fe-4S](2+) cluster] + N(6)-octanoyl-L-lysyl-[protein] + 2 oxidized [2Fe-2S]-[ferredoxin] + 2 S-adenosyl-L-methionine + 4 H(+) = [[Fe-S] cluster scaffold protein] + N(6)-[(R)-dihydrolipoyl]-L-lysyl-[protein] + 4 Fe(3+) + 2 hydrogen sulfide + 2 5'-deoxyadenosine + 2 L-methionine + 2 reduced [2Fe-2S]-[ferredoxin]. The protein operates within protein modification; protein lipoylation via endogenous pathway; protein N(6)-(lipoyl)lysine from octanoyl-[acyl-carrier-protein]: step 2/2. Its function is as follows. Catalyzes the radical-mediated insertion of two sulfur atoms into the C-6 and C-8 positions of the octanoyl moiety bound to the lipoyl domains of lipoate-dependent enzymes, thereby converting the octanoylated domains into lipoylated derivatives. The protein is Lipoyl synthase, mitochondrial of Eremothecium gossypii (strain ATCC 10895 / CBS 109.51 / FGSC 9923 / NRRL Y-1056) (Yeast).